A 164-amino-acid polypeptide reads, in one-letter code: Cyclic pyranopterin monophosphate synthase (164 aa).

Substrate-binding positions include 77 to 79 (LCH) and 115 to 116 (ME). Residue D130 is part of the active site.

The protein belongs to the MoaC family. In terms of assembly, homohexamer; trimer of dimers.

It catalyses the reaction (8S)-3',8-cyclo-7,8-dihydroguanosine 5'-triphosphate = cyclic pyranopterin phosphate + diphosphate. It functions in the pathway cofactor biosynthesis; molybdopterin biosynthesis. In terms of biological role, catalyzes the conversion of (8S)-3',8-cyclo-7,8-dihydroguanosine 5'-triphosphate to cyclic pyranopterin monophosphate (cPMP). The sequence is that of Cyclic pyranopterin monophosphate synthase from Sinorhizobium medicae (strain WSM419) (Ensifer medicae).